The following is a 94-amino-acid chain: Late cornified envelope-like proline-rich protein 1 (94 aa).

Disordered stretches follow at residues 1-26 (MSSD…CEQK) and 47-94 (CPRE…PPPE). Positions 53 to 94 (PAPPKCPPCPSPSPSSCPPKPCAKPCPPKCPSSCPPPCPPPE) are enriched in pro residues.

Belongs to the cornifin (SPRR) family.

The polypeptide is Late cornified envelope-like proline-rich protein 1 (LELP1) (Macaca fascicularis (Crab-eating macaque)).